The chain runs to 84 residues: Magnetosome protein MamG (84 aa).

The Cytoplasmic portion of the chain corresponds to 1 to 3; that stretch reads MIK. The helical transmembrane segment at 4 to 24 threads the bilayer; sequence GIAGVGGTALGVGGGVAAPPV. Over 25–40 the chain is Lumenal; that stretch reads SAAAVGSTLLAGKGVC. An LG repeat region spans residues 41–48; sequence LGLGLGLG. The helical transmembrane segment at 41–61 threads the bilayer; sequence LGLGLGLGAWGPVLLGVAGLA. Over 62–84 the chain is Cytoplasmic; sequence CAASLCDYLKNRKAQAEASAEPA.

It belongs to the magnetosome MamG (TC 9.B.95) protein family.

It is found in the magnetosome membrane. In terms of biological role, plays a role in regulating magnetite crystal size. The polypeptide is Magnetosome protein MamG (Magnetospirillum gryphiswaldense (strain DSM 6361 / JCM 21280 / NBRC 15271 / MSR-1)).